The sequence spans 116 residues: NADH-quinone oxidoreductase subunit A (116 aa).

The next 3 membrane-spanning stretches (helical) occupy residues 3–23 (FTLLVVVILTAIALVAVALGI), 61–81 (FAILFLMFDVETVFLFPWAVV), and 85–105 (LGVYGLFSILFFLVILVLGLA).

It belongs to the complex I subunit 3 family. In terms of assembly, NDH-1 is composed of 14 different subunits. Subunits NuoA, H, J, K, L, M, N constitute the membrane sector of the complex.

Its subcellular location is the cell inner membrane. It carries out the reaction a quinone + NADH + 5 H(+)(in) = a quinol + NAD(+) + 4 H(+)(out). NDH-1 shuttles electrons from NADH, via FMN and iron-sulfur (Fe-S) centers, to quinones in the respiratory chain. The immediate electron acceptor for the enzyme in this species is believed to be a menaquinone. Couples the redox reaction to proton translocation (for every two electrons transferred, four hydrogen ions are translocated across the cytoplasmic membrane), and thus conserves the redox energy in a proton gradient. This Phocaeicola vulgatus (strain ATCC 8482 / DSM 1447 / JCM 5826 / CCUG 4940 / NBRC 14291 / NCTC 11154) (Bacteroides vulgatus) protein is NADH-quinone oxidoreductase subunit A.